A 537-amino-acid chain; its full sequence is Inositol phosphorylceramide glucuronosyltransferase 1 (537 aa).

The helical transmembrane segment at 6–26 threads the bilayer; it reads TSLWVLLLALVSIQLNGSFGS. The Mn(2+) site is built by Asp124 and Asp126. Substrate contacts are provided by residues 124–126, 153–155, 180–184, and 248–255; these read DAD, NSG, TGGDQ, and HYTLGPLK. Residue His248 coordinates Mn(2+). Helical transmembrane passes span 293–313, 375–395, 406–426, 468–488, and 494–514; these read DELV…FCIY, VSVV…FAIV, VLVY…FLLF, MAFL…TALF, and MVGL…HLAV.

This sequence belongs to the glycosyltransferase 8 family. Glycogenin subfamily. Requires Mn(2+) as cofactor. As to expression, expressed in seedlings, roots, leaves, stems and siliques.

The protein localises to the golgi apparatus membrane. The enzyme catalyses glucuronate acceptor + UDP-alpha-D-glucuronate = acceptor beta-D-glucuronoside + UDP + H(+). It catalyses the reaction a 1D-myo-inositol-1-phospho-N-[(R)-2-hydroxy-very-long-chain fatty acyl]-(R)-4-hydroxysphingoid base + UDP-alpha-D-glucuronate = an alpha-D-glucuronosyl-(1&lt;-&gt;6)-1D-myo-inositol-1-phospho-N-[(R)-2-hydroxy-very-long-chain fatty acyl]-(R)-4-hydroxysphingoid base + UDP + H(+). Its pathway is sphingolipid metabolism. Mediates the transfer of glucuronic acid (GlcA) from UDP-GlcA to glycosyl inositol phosphorylceramides (GIPCs). The formation of GIPCs sphingolipids is essential for pollen function, plant growth and defense. Required for global fitness. This chain is Inositol phosphorylceramide glucuronosyltransferase 1, found in Arabidopsis thaliana (Mouse-ear cress).